Reading from the N-terminus, the 764-residue chain is Chloride anion exchanger (764 aa).

Residues 1–76 (MIEPFGNQYI…YRLKEWLLSD (76 aa)) lie on the Cytoplasmic side of the membrane. Residues 77–97 (IVSGISTGIVAVLQGLAFALL) traverse the membrane as a helical segment. Residues 98–99 (VD) are Extracellular-facing. Residues 100-120 (IPPVYGLYASFFPAIIYLFFG) form a helical membrane-spanning segment. At 121–124 (TSRH) the chain is on the cytoplasmic side. Residues 125–145 (ISVGPFPILSMMVGLAVSGAV) traverse the membrane as a helical segment. The Extracellular segment spans residues 146-175 (SKAVPDRNATTLGLPNNSNNSSLLDDERVR). 3 N-linked (GlcNAc...) asparagine glycosylation sites follow: Asn-153, Asn-161, and Asn-165. A helical transmembrane segment spans residues 176–196 (VAAAASVTVLSGIIQLAFGIL). Arg-197 is a topological domain (cytoplasmic). Residues 198-218 (IGFVVIYLSESLISGFTTAAA) traverse the membrane as a helical segment. Topologically, residues 219 to 257 (VHVLVSQLKFIFQLTVPSHTDPVSIFKVLYSVFSQIEKT) are extracellular. A helical transmembrane segment spans residues 258–278 (NIADLVTALIVLLVVSIVKEI). The Cytoplasmic segment spans residues 279–342 (NQRFKDKLPV…VETFQNTVGD (64 aa)). Residues 343–363 (CFGIAMVAFAVAFSVASVYSL) form a helical membrane-spanning segment. Residues 364–374 (KYDYPLDGNQE) are Extracellular-facing. A helical transmembrane segment spans residues 375–395 (LIALGLGNIVCGVFRGFAGST). At 396–411 (ALSRSAVQESTGGKTQ) the chain is on the cytoplasmic side. The helical transmembrane segment at 412–432 (IAGLIGAIIVLIVVLAIGFLL) threads the bilayer. The Extracellular segment spans residues 433-469 (APLQKSVLAALALGNLKGMLMQFAEIGRLWRKDKYDC). A helical membrane pass occupies residues 470–490 (LIWIMTFIFTIVLGLGLGLAA). Over 491–701 (SVAFQLLTIV…EKLNRYEFFD (211 aa)) the chain is Cytoplasmic. An STAS domain is found at 525–720 (DYYDMYEPEG…LTIHDAVLHI (196 aa)). Residues 761–764 (ETKF) carry the PDZ-binding motif.

This sequence belongs to the SLC26A/SulP transporter (TC 2.A.53) family. As to quaternary structure, interacts with CFTR, SLC26A6 and NHERF1. Interacts with PDZK1. Interacts (via PDZ-binding motif) with NHERF4 (via the third PDZ domain); interaction leads to decreased expression of SLC26A3 on the cell membrane resulting in its reduced exchanger activity. N-glycosylation is required for efficient cell surface expression, and protection from proteolytic degradation. As to expression, expressed in the colon. Expression is significantly decreased in adenomas (polyps) and adenocarcinomas of the colon.

It localises to the apical cell membrane. The protein localises to the membrane. Its subcellular location is the cell membrane. It carries out the reaction hydrogencarbonate(in) + 2 chloride(out) = hydrogencarbonate(out) + 2 chloride(in). Inhibited by acidic pH. Its function is as follows. Mediates chloride-bicarbonate exchange with a chloride bicarbonate stoichiometry of 2:1 in the intestinal epithelia. Plays a role in the chloride and bicarbonate homeostasis during sperm epididymal maturation and capacitation. The sequence is that of Chloride anion exchanger (SLC26A3) from Homo sapiens (Human).